Reading from the N-terminus, the 202-residue chain is MEHYISLFVKAVFVENMALAFFLGMCTFIAISKKVETAIGLGIAVIVVQTITVPANNLIYTYLLKDGALAWAGLPEVDLSFLGLLSYIGVIAAIVQILEMLLDKYVPSLYNALGVFLPLITVNCAIMAGSLFMVERDYNLAESTVYGVGSGFSWALAIAALAGIREKLKYSDVPEGLQGLGITFITIGLMSLGFMSFSGVQL.

6 helical membrane passes run 11–31 (AVFV…FIAI), 35–55 (VETA…TVPA), 81–101 (FLGL…LEML), 114–134 (GVFL…LFMV), 144–164 (TVYG…LAGI), and 180–200 (LGIT…FSGV).

Belongs to the NqrDE/RnfAE family. Composed of six subunits; NqrA, NqrB, NqrC, NqrD, NqrE and NqrF.

The protein resides in the cell inner membrane. It carries out the reaction a ubiquinone + n Na(+)(in) + NADH + H(+) = a ubiquinol + n Na(+)(out) + NAD(+). NQR complex catalyzes the reduction of ubiquinone-1 to ubiquinol by two successive reactions, coupled with the transport of Na(+) ions from the cytoplasm to the periplasm. NqrA to NqrE are probably involved in the second step, the conversion of ubisemiquinone to ubiquinol. The protein is Na(+)-translocating NADH-quinone reductase subunit E of Pseudomonas aeruginosa (strain LESB58).